We begin with the raw amino-acid sequence, 437 residues long: GTPase Der (437 aa).

2 EngA-type G domains span residues P4–A167 and I176–R352. Residues G10–S17, D57–I61, N119–D122, G182–S189, D230–M234, and N295–D298 each bind GTP. Residues K353–K437 enclose the KH-like domain.

It belongs to the TRAFAC class TrmE-Era-EngA-EngB-Septin-like GTPase superfamily. EngA (Der) GTPase family. As to quaternary structure, associates with the 50S ribosomal subunit.

Functionally, GTPase that plays an essential role in the late steps of ribosome biogenesis. This is GTPase Der from Leuconostoc citreum (strain KM20).